Reading from the N-terminus, the 88-residue chain is Small ribosomal subunit protein uS19 (88 aa).

Belongs to the universal ribosomal protein uS19 family.

Its function is as follows. Protein S19 forms a complex with S13 that binds strongly to the 16S ribosomal RNA. The protein is Small ribosomal subunit protein uS19 of Chlamydia caviae (strain ATCC VR-813 / DSM 19441 / 03DC25 / GPIC) (Chlamydophila caviae).